Reading from the N-terminus, the 543-residue chain is Allantoate permease (543 aa).

The Cytoplasmic portion of the chain corresponds to Met1 to Lys80. A helical membrane pass occupies residues Ile81 to Phe97. Residues Met98–Ser123 lie on the Extracellular side of the membrane. Residues Trp124–Phe145 traverse the membrane as a helical segment. Residues Gln146–Met154 are Cytoplasmic-facing. Residues Leu155–Ala171 form a helical membrane-spanning segment. The Extracellular segment spans residues Pro172–Ser178. The helical transmembrane segment at Phe179 to Ile200 threads the bilayer. Topologically, residues Thr201–Arg213 are cytoplasmic. Residues Val214–Ile237 form a helical membrane-spanning segment. At His238–Arg248 the chain is on the extracellular side. The helical transmembrane segment at Thr249–Ile269 threads the bilayer. Residues Pro270–Thr317 lie on the Cytoplasmic side of the membrane. The helical transmembrane segment at Trp318–Leu342 threads the bilayer. Topologically, residues Asn343–Glu352 are extracellular. A helical membrane pass occupies residues Thr353 to Tyr377. Over Ala378–Lys389 the chain is Cytoplasmic. A helical membrane pass occupies residues Leu390–Thr411. The Extracellular portion of the chain corresponds to Asn412–Arg417. The chain crosses the membrane as a helical span at residues Leu418 to Leu435. Residues Ser436–Ser453 lie on the Cytoplasmic side of the membrane. A helical transmembrane segment spans residues Ile454–Ala472. Over Lys473–Lys482 the chain is Extracellular. A helical transmembrane segment spans residues Val483–Leu504. The Cytoplasmic portion of the chain corresponds to Arg505 to Leu543.

Belongs to the major facilitator superfamily. Allantoate permease family.

It is found in the membrane. Functionally, component of the allantoate transport system. This Saccharomyces cerevisiae (strain ATCC 204508 / S288c) (Baker's yeast) protein is Allantoate permease (DAL5).